Reading from the N-terminus, the 275-residue chain is Formamidopyrimidine-DNA glycosylase (275 aa).

The Schiff-base intermediate with DNA role is filled by Pro-2. Glu-3 serves as the catalytic Proton donor. The active-site Proton donor; for beta-elimination activity is the Lys-58. DNA contacts are provided by His-91 and Arg-110. Residues 238-272 (QVYGQTGKPCPRCGQAIVKLKVGGRGTHICPKCQK) form an FPG-type zinc finger. The Proton donor; for delta-elimination activity role is filled by Arg-262.

It belongs to the FPG family. Monomer. Zn(2+) is required as a cofactor.

It carries out the reaction Hydrolysis of DNA containing ring-opened 7-methylguanine residues, releasing 2,6-diamino-4-hydroxy-5-(N-methyl)formamidopyrimidine.. It catalyses the reaction 2'-deoxyribonucleotide-(2'-deoxyribose 5'-phosphate)-2'-deoxyribonucleotide-DNA = a 3'-end 2'-deoxyribonucleotide-(2,3-dehydro-2,3-deoxyribose 5'-phosphate)-DNA + a 5'-end 5'-phospho-2'-deoxyribonucleoside-DNA + H(+). In terms of biological role, involved in base excision repair of DNA damaged by oxidation or by mutagenic agents. Acts as a DNA glycosylase that recognizes and removes damaged bases. Has a preference for oxidized purines, such as 7,8-dihydro-8-oxoguanine (8-oxoG). Has AP (apurinic/apyrimidinic) lyase activity and introduces nicks in the DNA strand. Cleaves the DNA backbone by beta-delta elimination to generate a single-strand break at the site of the removed base with both 3'- and 5'-phosphates. The polypeptide is Formamidopyrimidine-DNA glycosylase (Streptococcus pyogenes serotype M6 (strain ATCC BAA-946 / MGAS10394)).